Consider the following 213-residue polypeptide: Large ribosomal subunit protein uL1 (213 aa).

The protein belongs to the universal ribosomal protein uL1 family. As to quaternary structure, part of the 50S ribosomal subunit.

Binds directly to 23S rRNA. Probably involved in E site tRNA release. Its function is as follows. Protein L1 is also a translational repressor protein, it controls the translation of its operon by binding to its mRNA. This chain is Large ribosomal subunit protein uL1, found in Methanococcus maripaludis (strain C5 / ATCC BAA-1333).